The sequence spans 576 residues: Lysine--tRNA ligase (576 aa).

The Mg(2+) site is built by E412 and E419.

It belongs to the class-II aminoacyl-tRNA synthetase family. Homodimer. Requires Mg(2+) as cofactor.

The protein localises to the cytoplasm. The catalysed reaction is tRNA(Lys) + L-lysine + ATP = L-lysyl-tRNA(Lys) + AMP + diphosphate. The protein is Lysine--tRNA ligase of Parabacteroides distasonis (strain ATCC 8503 / DSM 20701 / CIP 104284 / JCM 5825 / NCTC 11152).